The chain runs to 142 residues: Large ribosomal subunit protein uL13 (142 aa).

It belongs to the universal ribosomal protein uL13 family. In terms of assembly, part of the 50S ribosomal subunit.

Its function is as follows. This protein is one of the early assembly proteins of the 50S ribosomal subunit, although it is not seen to bind rRNA by itself. It is important during the early stages of 50S assembly. This is Large ribosomal subunit protein uL13 from Bordetella petrii (strain ATCC BAA-461 / DSM 12804 / CCUG 43448).